The following is a 213-amino-acid chain: Small ribosomal subunit protein uS4 (213 aa).

The region spanning 97 to 165 is the S4 RNA-binding domain; it reads RRLDNVVYRM…AKEQLRIKNA (69 aa).

Belongs to the universal ribosomal protein uS4 family. Part of the 30S ribosomal subunit. Contacts protein S5. The interaction surface between S4 and S5 is involved in control of translational fidelity.

Functionally, one of the primary rRNA binding proteins, it binds directly to 16S rRNA where it nucleates assembly of the body of the 30S subunit. With S5 and S12 plays an important role in translational accuracy. The protein is Small ribosomal subunit protein uS4 of Psychrobacter sp. (strain PRwf-1).